We begin with the raw amino-acid sequence, 268 residues long: Ribosomal RNA small subunit methyltransferase A (268 aa).

S-adenosyl-L-methionine-binding residues include Asn16, Leu18, Gly43, Glu64, Asp89, and Asn110.

The protein belongs to the class I-like SAM-binding methyltransferase superfamily. rRNA adenine N(6)-methyltransferase family. RsmA subfamily.

It localises to the cytoplasm. It carries out the reaction adenosine(1518)/adenosine(1519) in 16S rRNA + 4 S-adenosyl-L-methionine = N(6)-dimethyladenosine(1518)/N(6)-dimethyladenosine(1519) in 16S rRNA + 4 S-adenosyl-L-homocysteine + 4 H(+). Specifically dimethylates two adjacent adenosines (A1518 and A1519) in the loop of a conserved hairpin near the 3'-end of 16S rRNA in the 30S particle. May play a critical role in biogenesis of 30S subunits. This is Ribosomal RNA small subunit methyltransferase A from Pseudomonas savastanoi pv. phaseolicola (strain 1448A / Race 6) (Pseudomonas syringae pv. phaseolicola (strain 1448A / Race 6)).